Here is a 654-residue protein sequence, read N- to C-terminus: Coiled-coil domain-containing protein 30 (654 aa).

The disordered stretch occupies residues 38 to 65; the sequence is TLESRRDPNSSLQKEFPQHQDEDQSRAA. Basic and acidic residues predominate over residues 53–62; sequence FPQHQDEDQS. Coiled-coil stretches lie at residues 97-244 and 276-559; these read REER…LDNA and KSQQ…QIIR. Residues 614–654 are disordered; it reads AAAIPKSPEPLSRSQDSESGYINVTSLKETHNTQGDQKPEL. The span at 625–654 shows a compositional bias: polar residues; the sequence is SRSQDSESGYINVTSLKETHNTQGDQKPEL.

This sequence belongs to the prefoldin subunit beta family.

The chain is Coiled-coil domain-containing protein 30 (Ccdc30) from Mus musculus (Mouse).